Here is a 488-residue protein sequence, read N- to C-terminus: TOX high mobility group box family member 2 (488 aa).

The required for transcriptional activation stretch occupies residues Y76–L114. 3 disordered regions span residues R192 to P258, W293 to M328, and S363 to I473. Residues G204–T216 show a composition bias toward low complexity. Over residues E222–K239 the composition is skewed to basic and acidic residues. The Nuclear localization signal motif lies at V223–P252. A compositionally biased stretch (basic residues) spans K240–K250. The HMG box DNA-binding region spans P255–P323. Residues Q302–N316 are compositionally biased toward polar residues. Positions P443 to G460 are enriched in low complexity.

The protein resides in the nucleus. In terms of biological role, putative transcriptional activator involved in the hypothalamo-pituitary-gonadal system. This is TOX high mobility group box family member 2 (TOX2) from Homo sapiens (Human).